The following is a 367-amino-acid chain: Phosphoribosylaminoimidazole-succinocarboxamide synthase (367 aa).

Belongs to the SAICAR synthetase family.

It catalyses the reaction 5-amino-1-(5-phospho-D-ribosyl)imidazole-4-carboxylate + L-aspartate + ATP = (2S)-2-[5-amino-1-(5-phospho-beta-D-ribosyl)imidazole-4-carboxamido]succinate + ADP + phosphate + 2 H(+). It participates in purine metabolism; IMP biosynthesis via de novo pathway; 5-amino-1-(5-phospho-D-ribosyl)imidazole-4-carboxamide from 5-amino-1-(5-phospho-D-ribosyl)imidazole-4-carboxylate: step 1/2. The sequence is that of Phosphoribosylaminoimidazole-succinocarboxamide synthase from Vibrio atlanticus (strain LGP32) (Vibrio splendidus (strain Mel32)).